Here is a 223-residue protein sequence, read N- to C-terminus: Putative 3-methyladenine DNA glycosylase (223 aa).

It belongs to the DNA glycosylase MPG family.

This Pseudomonas syringae pv. tomato (strain ATCC BAA-871 / DC3000) protein is Putative 3-methyladenine DNA glycosylase.